The following is a 103-amino-acid chain: Cell division protein FtsB (103 aa).

Residues 1 to 3 (MGK) are Cytoplasmic-facing. Residues 4 to 21 (LTLLLLALLVWLQYSLWF) form a helical membrane-spanning segment. Topologically, residues 22-103 (GKNGIHDYSR…RAGGPAQNNR (82 aa)) are periplasmic. Residues 38–62 (VQQATNAKLKARNDQLFAEIDDLNG) are a coiled coil.

It belongs to the FtsB family. In terms of assembly, part of a complex composed of FtsB, FtsL and FtsQ.

It is found in the cell inner membrane. Functionally, essential cell division protein. May link together the upstream cell division proteins, which are predominantly cytoplasmic, with the downstream cell division proteins, which are predominantly periplasmic. The protein is Cell division protein FtsB of Cronobacter sakazakii (strain ATCC BAA-894) (Enterobacter sakazakii).